The sequence spans 294 residues: Gap junction delta-3 protein (294 aa).

Over 1 to 24 the chain is Cytoplasmic; sequence MGEWAFLGSLLDAVQLQSPLVGRL. Residues 25 to 45 traverse the membrane as a helical segment; it reads WLVVMLIFRILVLATVGGAVF. Over 46-76 the chain is Extracellular; sequence EDEQEEFVCNTLQPGCRQTCYDRAFPVSHYR. The helical transmembrane segment at 77 to 97 threads the bilayer; sequence FWLFHILLLSAPPVLFVVYSM. Residues 98–136 lie on the Cytoplasmic side of the membrane; it reads HRAGKEAGGAEAAAQCAPGLPEAQCAPCALRARRARRCY. The chain crosses the membrane as a helical span at residues 137-157; it reads LLSVALRLLAELTFLGGQALL. Residues 158 to 188 lie on the Extracellular side of the membrane; that stretch reads YGFRVAPHFACAGPPCPHTVDCFVSRPTEKT. The chain crosses the membrane as a helical span at residues 189-209; the sequence is VFVLFYFAVGLLSALLSVAEL. At 210–294 the chain is on the cytoplasmic side; it reads GHLLWKGRPR…PATGRRDLAI (85 aa). The tract at residues 233-294 is disordered; the sequence is EAQKLLPPPP…PATGRRDLAI (62 aa). Over residues 238 to 250 the composition is skewed to pro residues; that stretch reads LPPPPPPPPPPAL.

It belongs to the connexin family. Delta-type subfamily. In terms of assembly, a connexon is composed of a hexamer of connexins. Interacts with TJP1. In terms of tissue distribution, expressed in vascular smooth muscle cells. Found in heart, colon, and artery (at protein level). Found in cerebral cortex, heart, liver, lung, kidney, spleen and testis.

It is found in the cell membrane. The protein resides in the cell junction. Its subcellular location is the gap junction. One gap junction consists of a cluster of closely packed pairs of transmembrane channels, the connexons, through which materials of low MW diffuse from one cell to a neighboring cell. In Homo sapiens (Human), this protein is Gap junction delta-3 protein (GJD3).